A 106-amino-acid polypeptide reads, in one-letter code: Putative membrane protein insertion efficiency factor (106 aa).

It belongs to the UPF0161 family.

Its subcellular location is the cell inner membrane. Could be involved in insertion of integral membrane proteins into the membrane. The chain is Putative membrane protein insertion efficiency factor from Methylacidiphilum infernorum (isolate V4) (Methylokorus infernorum (strain V4)).